Reading from the N-terminus, the 196-residue chain is Holliday junction branch migration complex subunit RuvA (196 aa).

Positions Met-1–Ala-63 are domain I. Residues Glu-64–Pro-142 form a domain II region. The flexible linker stretch occupies residues Pro-142–Val-146. Residues Ser-147–Leu-196 are domain III.

This sequence belongs to the RuvA family. As to quaternary structure, homotetramer. Forms an RuvA(8)-RuvB(12)-Holliday junction (HJ) complex. HJ DNA is sandwiched between 2 RuvA tetramers; dsDNA enters through RuvA and exits via RuvB. An RuvB hexamer assembles on each DNA strand where it exits the tetramer. Each RuvB hexamer is contacted by two RuvA subunits (via domain III) on 2 adjacent RuvB subunits; this complex drives branch migration. In the full resolvosome a probable DNA-RuvA(4)-RuvB(12)-RuvC(2) complex forms which resolves the HJ.

Its subcellular location is the cytoplasm. The RuvA-RuvB-RuvC complex processes Holliday junction (HJ) DNA during genetic recombination and DNA repair, while the RuvA-RuvB complex plays an important role in the rescue of blocked DNA replication forks via replication fork reversal (RFR). RuvA specifically binds to HJ cruciform DNA, conferring on it an open structure. The RuvB hexamer acts as an ATP-dependent pump, pulling dsDNA into and through the RuvAB complex. HJ branch migration allows RuvC to scan DNA until it finds its consensus sequence, where it cleaves and resolves the cruciform DNA. This is Holliday junction branch migration complex subunit RuvA from Parabacteroides distasonis (strain ATCC 8503 / DSM 20701 / CIP 104284 / JCM 5825 / NCTC 11152).